The sequence spans 348 residues: MVHQLSLVSSIAHGSYVQTVSTLQAFTGMLSPQPIATYTLLTKPHEVFKPKFEPGKVNQIEQYYMKCITTWSDGSEFDLASAVIKENGSSNVFSGRLFHAEDESVQRIWTLQISDIPIAGKNQACSAQTIYESTLIHTHTNVKSEENKIDAMDVDLEHKDKSDVKGDTKEKEEDKKEEDKKEEDKKEEDKKEEDKKEEDKKEEEKVEKKNDEVKHSEVNLEDGAETGSGHKDSFLQFLEDLGYETISQYWIKGIRFFHGDIVIEIFKVLVRDDEVTEPKEEGKIALKLLDESNTFQIRTYINIAKSTDIDLINQGTKELLRLQEFLKNLFKLEIPDRMFMDSRVQVRK.

Residues 152–218 (MDVDLEHKDK…KNDEVKHSEV (67 aa)) are compositionally biased toward basic and acidic residues. Positions 152–227 (MDVDLEHKDK…VNLEDGAETG (76 aa)) are disordered. The stretch at 167 to 223 (DTKEKEEDKKEEDKKEEDKKEEDKKEEDKKEEDKKEEEKVEKKNDEVKHSEVNLEDG) forms a coiled coil.

Belongs to the Mediator complex subunit 18 family. In terms of assembly, component of the Mediator complex.

Its subcellular location is the nucleus. Functionally, component of the Mediator complex, a coactivator involved in the regulated transcription of nearly all RNA polymerase II-dependent genes. Mediator functions as a bridge to convey information from gene-specific regulatory proteins to the basal RNA polymerase II transcription machinery. Mediator is recruited to promoters by direct interactions with regulatory proteins and serves as a scaffold for the assembly of a functional preinitiation complex with RNA polymerase II and the general transcription factors. This Scheffersomyces stipitis (strain ATCC 58785 / CBS 6054 / NBRC 10063 / NRRL Y-11545) (Yeast) protein is Mediator of RNA polymerase II transcription subunit 18 (SRB5).